A 172-amino-acid chain; its full sequence is Transcriptional repressor NrdR (172 aa).

A zinc finger lies at 3–34; that stretch reads CPFCGEADTKVIDSRLVAEGDQVRRRRECLSC. Positions 49–139 constitute an ATP-cone domain; it reads PRVVKQDGTR…VYRSFQDINE (91 aa).

It belongs to the NrdR family. The cofactor is Zn(2+).

In terms of biological role, negatively regulates transcription of bacterial ribonucleotide reductase nrd genes and operons by binding to NrdR-boxes. This Marinobacter nauticus (strain ATCC 700491 / DSM 11845 / VT8) (Marinobacter aquaeolei) protein is Transcriptional repressor NrdR.